Here is a 130-residue protein sequence, read N- to C-terminus: Small ribosomal subunit protein uS9 (130 aa).

This sequence belongs to the universal ribosomal protein uS9 family.

The sequence is that of Small ribosomal subunit protein uS9 (rpsI) from Geobacillus stearothermophilus (Bacillus stearothermophilus).